Consider the following 476-residue polypeptide: Probable flippase AglR (476 aa).

The next 14 membrane-spanning stretches (helical) occupy residues 7–29 (ASAL…TIYV), 34–56 (GVGA…IPAV), 83–103 (VLTG…SPFV), 112–132 (TQLV…LGGL), 146–166 (ALWG…GVGV), 168–188 (ALFY…VYSL), 222–242 (WLDT…IYEV), 246–266 (ISAL…PTIS), 287–307 (VAGV…GDIL), 310–330 (YGPS…LSVV), 354–373 (FRIG…SLIP), 377–396 (VIGA…ILAV), 409–429 (VSAI…LFTI), and 439–459 (IEVV…LLSL).

It belongs to the AglR/Agl15 family.

It localises to the cell membrane. It functions in the pathway cell surface structure biogenesis; S-layer biogenesis. Involved in the assembly of a N-linked pentasaccharide that decorates the S-layer glycoprotein and flagellins. Probably mediates or contributes to the translocation of the dolichol-phosphate-mannose across the membrane. The polypeptide is Probable flippase AglR (aglR) (Haloferax volcanii (strain ATCC 29605 / DSM 3757 / JCM 8879 / NBRC 14742 / NCIMB 2012 / VKM B-1768 / DS2) (Halobacterium volcanii)).